We begin with the raw amino-acid sequence, 372 residues long: Alpha-parvin (372 aa).

The segment covering 1-11 (MATSPQKSPSV) has biased composition (low complexity). A disordered region spans residues 1–44 (MATSPQKSPSVPKSPTPKSPPSRKKDDSFLGKLGGTLARRKKAK). An N-acetylalanine modification is found at A2. 3 positions are modified to phosphoserine: S8, S14, and S19. Residues 21–25 (PSRKK) are interaction with ARHGAP31. S28 and S62 each carry phosphoserine. Calponin-homology (CH) domains lie at 95 to 202 (QELM…QYFR) and 262 to 369 (NVVK…TKYR). The interval 223 to 372 (GILQSRQIQE…NLFTKYRNVE (150 aa)) is required for interaction with TESK1 and ILK.

Belongs to the parvin family. As to quaternary structure, component of the heterotrimeric IPP (ILK-PINCH-PARVIN) complex composed of ILK, LIMS1/PINCH and PARVA; the complex binds to F-actin via the C-terminal tail of LIMS1 and the N-terminal region of PARVA, promoting F-actin filament bundling. Interacts with TGFB1I1. Interacts with ARHGAP31. Interacts with the actin cytoskeleton. Interacts (via C-terminus) with TESK1 (via C-terminus); the interaction inhibits TESK1 kinase activity. Interacts with PXN/PAXILLIN (via LD motif 4). In terms of tissue distribution, widely expressed.

The protein localises to the cell junction. Its subcellular location is the focal adhesion. It is found in the cell membrane. It localises to the cytoplasm. The protein resides in the cytoskeleton. The protein localises to the myofibril. Its subcellular location is the sarcomere. It is found in the z line. Plays a role in sarcomere organization and in smooth muscle cell contraction. Required for normal development of the embryonic cardiovascular system, and for normal septation of the heart outflow tract. Plays a role in sprouting angiogenesis and is required for normal adhesion of vascular smooth muscle cells to endothelial cells during blood vessel development. Plays a role in the reorganization of the actin cytoskeleton, formation of lamellipodia and ciliogenesis. Plays a role in the establishment of cell polarity, cell adhesion, cell spreading, and directed cell migration. Within the IPP (ILK-PINCH-PARVIN) complex, binds to F-actin, promoting F-actin bundling, a process required to generate force for actin cytoskeleton reorganization and subsequent dynamic cell adhesion events such as cell spreading and migration. The sequence is that of Alpha-parvin (Parva) from Rattus norvegicus (Rat).